The following is a 311-amino-acid chain: Malate dehydrogenase (311 aa).

NAD(+) is bound by residues 7–13 (GAAGGIG) and Asp-34. Substrate contacts are provided by Arg-81 and Arg-87. NAD(+) is bound by residues Asn-94 and 117–119 (ITN). Substrate-binding residues include Asn-119 and Arg-153. The active-site Proton acceptor is the His-177. NAD(+) is bound at residue Met-227.

This sequence belongs to the LDH/MDH superfamily. MDH type 1 family. Homodimer.

It catalyses the reaction (S)-malate + NAD(+) = oxaloacetate + NADH + H(+). Catalyzes the reversible oxidation of malate to oxaloacetate. The sequence is that of Malate dehydrogenase from Yersinia enterocolitica serotype O:8 / biotype 1B (strain NCTC 13174 / 8081).